The following is a 253-amino-acid chain: Small ribosomal subunit protein uS2 (253 aa).

It belongs to the universal ribosomal protein uS2 family.

This is Small ribosomal subunit protein uS2 from Parvibaculum lavamentivorans (strain DS-1 / DSM 13023 / NCIMB 13966).